We begin with the raw amino-acid sequence, 1132 residues long: MLSILHSLSWMAHWINPTATIAPSTPPQAGEKNANVKNGTVQTNGVNHTERLAGRAPNLLHPAIDYPGITSYEAGGSLILTDIFPTVLFMFVVLFCRWFNGFAPRQERFQRLEYEAILRRRRFRVQSEESEELEDHEAYSETDICTQLIASSANVACNINVDLVNQNRFYFFVKQNNEDETAVPSDVPPPETSIKNEDTEVNLVFASAEDNGYISSTFEVSETSLMVTSEVYEVEKVSVNEDQSSRPVNVIVNESDDEQSLRSQDGSRCSDEAMNSCMSASEDEDVESQEDSYHVNDATEDSVSSIKTQEDEPIEEELASCHSDEDDHQNEVLGDEEASKYDNLPVEMRSAKEGDESEGTIDSSVSSSTSSTPDDDEDDSATSYDSDDIEIQMFEYDLGTVCASASISIPRPSIIPKKNKKAEVNANEERMDDVSVSPGRSDSPGGGGGHSDSFQDPLDPGEQLGSDDEEQEDPRDYKRGGYHPVNIGDVFNSRYHVIRKLGWGHFSTVWLAWDTQEKRFTAMKIVKSAEHYTEAALDEIKLLLSVRGADPEDTGCHKVVQLLDEFTVTGINGQHVAMVFEVLGCNLLKLIIRSNYRGLHLEQVRKICKQILEALRYMHEKCGIIHTDIKPENVLITMSREEIKIMAQHAVVARKMNMKMSGSAVSTAPDHLVKMAQENMTKNKKKKMKKKAKKQREKLEAELAGLEGLKMDANGLQEAYNNAPQNGIRMRPPSLLFNGPIPQLLQGSSCVNTPSSPRSVPPPPALYPQAGGVCNQTYHLSQVILNEQVELESFNTSQVEDVNIEDAVNGNGNGTNNKIELKSPDRFDRTTLTPFSDPESKIGELASPSSEFLSSPMSMLPPGGVLPAPPVGPNIADPYCDIDVKIADLGNACWVNHHYTDDIQTRQYRALEVLIGSGYGPPADIWSTACMAFELATGDYLFEPHQGDNYSRDEDHLAHISELLGQISPSIYKKGKHWREFFHKNGNLLHIHNLKPWSLYEVLRQKYEWSHEDAQQFESFLRPMLDFDQEKRATANDALKHPFLLPFGGKAPRDPEVLQRLYPDGQVPEALDGNQEVYRDENDSNSASERSANRSAGSDDEEEFHMDRPGPSGVINEPADVSEIESFQLNLQ.

The helical transmembrane segment at 75-95 threads the bilayer; sequence GGSLILTDIFPTVLFMFVVLF. Disordered stretches follow at residues 240-388 and 419-481; these read NEDQ…DSDD and NKKA…KRGG. 2 stretches are compositionally biased toward acidic residues: residues 281–290 and 311–336; these read SEDEDVESQE and DEPIEEELASCHSDEDDHQNEVLGDE. The span at 362–372 shows a compositional bias: low complexity; that stretch reads DSSVSSSTSST. Positions 373-388 are enriched in acidic residues; that stretch reads PDDDEDDSATSYDSDD. The segment covering 421–433 has biased composition (basic and acidic residues); sequence KAEVNANEERMDD. Positions 434–443 are enriched in low complexity; it reads VSVSPGRSDS. The 550-residue stretch at 495–1044 folds into the Protein kinase domain; the sequence is YHVIRKLGWG…ANDALKHPFL (550 aa). ATP-binding positions include 501-509 and K524; that span reads LGWGHFSTV. The Proton acceptor role is filled by D628. Residues 1066-1121 are disordered; sequence QVPEALDGNQEVYRDENDSNSASERSANRSAGSDDEEEFHMDRPGPSGVINEPADV. The span at 1084-1096 shows a compositional bias: low complexity; it reads SNSASERSANRSA.

It belongs to the protein kinase superfamily. Ser/Thr protein kinase family.

It is found in the membrane. The catalysed reaction is L-seryl-[protein] + ATP = O-phospho-L-seryl-[protein] + ADP + H(+). The enzyme catalyses L-threonyl-[protein] + ATP = O-phospho-L-threonyl-[protein] + ADP + H(+). In terms of biological role, required for embryogenesis and germline development in both adult hermaphrodites and males. SR-protein kinase (SRPK) that binds directly to and phosphorylates RS domains. This Caenorhabditis briggsae protein is Serine/threonine-protein kinase spk-1 (spk-1).